The primary structure comprises 543 residues: MPLQEETLREVWASDSGHEEDCLSPEPPLRPKQRPAQGQKLRKKKPETPDSLESKPRKAGAGRRKHEEPPADSAEPRAAQTVYAKFLRDPEAKKRDPRENFLVARAPDLGGEENSEEDSDDDDNDDDEEEEEKKEGKKEKSSLPPKKAPKEREKKAKALGPRGDVGSPDAPRKPLRTKKKEVGEGTKLRKAKKKGPGETDKDPAGSPAALRKEFPAAMFLVGEGGAAEKGVKKKGPPKGSEEEKKEEEEEVEEEVASAVMKNSNQKGRAKGKGKKKVKEERASSPPVEVGEPREFVLQPAPQGRAVRCRLTRDKKGMDRGMYPSYFLHLDTEKKVFLLAGRKRKRSKTANYLISSDPTNLSRGGENFIGKLRSNLLGNRFTVFDNGQNPQRGGGGDVGSLRQELAAVVYETNVLGFRGPRRMTVIIPGMNSDNERVPIRPRNASDGLLVRWQNKTLESLIELHNKPPIWNEDSGSYTLNFQGRVTQASVKNFQIVHADDPDYIVLQFGRVAEDAFTLDYRYPLCALQAFAIALSSFDGKLACE.

The disordered stretch occupies residues 1–290 (MPLQEETLRE…RASSPPVEVG (290 aa)). Basic and acidic residues-rich tracts occupy residues 46-56 (PETPDSLESKP) and 86-99 (FLRD…DPRE). Acidic residues-rich tracts occupy residues 110–132 (GGEE…EEEE) and 244–255 (KKEEEEEVEEEV). Residues 267–276 (GRAKGKGKKK) are compositionally biased toward basic residues.

This sequence belongs to the TUB family. As to quaternary structure, homodimer. May interact with ABCF1, PSIP1, ZEB1 and HMGB2 (Potential). Interacts with F-actin. Interacts with DNM1. Interacts with TUB. Interacts with TYRO3. As to expression, retina specific. Detected in the outer plexiform layer in photoreceptor cells (at protein level).

It localises to the cytoplasm. It is found in the cell membrane. The protein localises to the secreted. The protein resides in the synapse. Required for normal development of photoreceptor synapses. Required for normal photoreceptor function and for long-term survival of photoreceptor cells. Interacts with cytoskeleton proteins and may play a role in protein transport in photoreceptor cells. Binds lipids, especially phosphatidylinositol 3-phosphate, phosphatidylinositol 4-phosphate, phosphatidylinositol 5-phosphate, phosphatidylinositol 3,4-bisphosphate, phosphatidylinositol 4,5-bisphosphate, phosphatidylinositol 3,4,5-bisphosphate, phosphatidylserine and phosphatidic acid (in vitro). Contribute to stimulation of phagocytosis of apoptotic retinal pigment epithelium (RPE) cells and macrophages. The protein is Tubby-related protein 1 (Tulp1) of Mus musculus (Mouse).